The primary structure comprises 388 residues: MKWMVVAFICLQLLEATVVKVPLKKFKSIRETMKEKGLLWEFLKTHKHDPARKYRVSDLSVSYEPMDYMDAAYFGEISIGTPPQNFLVLFDTGSSNLWVPSVYCQSQACTSHSRFNPSASSTYSSNGQTFSLQYGSGSLTGFFGYDTLTVQSIQVPNQEFGLSENEPGTNFVYAQFDGIMGLAYPALSMGGATTAMQGMLQEGALTSPVFSFYLSNQQGSSGGAVIFGGVDSSLYTGQIYWAPVTQELYWQIGIEEFLIGGQASGWCSEGCQAIVDTGTSLLTVPQQYMSAFLEATGAQEDEYGQFLVNCDSIQNLPTLTFIINGVEFPLPPSSYILSNNGYCTVGVEPTYLSSQNSQPLWILGDVFLRSYYSVFDLGNNRVGFATAA.

The signal sequence occupies residues 1-16; sequence MKWMVVAFICLQLLEA. The propeptide at 17 to 59 is activation peptide; that stretch reads TVVKVPLKKFKSIRETMKEKGLLWEFLKTHKHDPARKYRVSDL. The region spanning 73–385 is the Peptidase A1 domain; that stretch reads YFGEISIGTP…DLGNNRVGFA (313 aa). Asp-91 is an active-site residue. 2 disulfides stabilise this stretch: Cys-104–Cys-109 and Cys-267–Cys-271. Asp-276 is a catalytic residue. A disulfide bridge connects residues Cys-310 and Cys-343.

The protein belongs to the peptidase A1 family.

The protein resides in the secreted. The enzyme catalyses More restricted specificity than pepsin A, but shows preferential cleavage at Tyr-|-Xaa bonds. High activity on hemoglobin.. Its activity is regulated as follows. Inhibited by pepstatin. Functionally, hydrolyzes a variety of proteins. The chain is Gastricsin (PGC) from Callithrix jacchus (White-tufted-ear marmoset).